Reading from the N-terminus, the 308-residue chain is GTPase Era (308 aa).

In terms of domain architecture, Era-type G spans 14-181 (RCGFVALIGA…KQALAAMVPP (168 aa)). A G1 region spans residues 22–29 (GAPNVGKS). 22–29 (GAPNVGKS) contributes to the GTP binding site. The segment at 48-52 (QTTRA) is G2. The G3 stretch occupies residues 69 to 72 (DTPG). GTP contacts are provided by residues 69–73 (DTPGI) and 131–134 (NKVD). A G4 region spans residues 131 to 134 (NKVD). A G5 region spans residues 160–162 (ISA). The KH type-2 domain occupies 212–289 (LHQELPYQST…HLFLFVKVRE (78 aa)).

Belongs to the TRAFAC class TrmE-Era-EngA-EngB-Septin-like GTPase superfamily. Era GTPase family. As to quaternary structure, monomer.

It localises to the cytoplasm. It is found in the cell inner membrane. Its function is as follows. An essential GTPase that binds both GDP and GTP, with rapid nucleotide exchange. Plays a role in 16S rRNA processing and 30S ribosomal subunit biogenesis and possibly also in cell cycle regulation and energy metabolism. This is GTPase Era from Bradyrhizobium sp. (strain BTAi1 / ATCC BAA-1182).